The sequence spans 983 residues: Eukaryotic translation initiation factor 4E transporter (983 aa).

A disordered region spans residues 1–22; sequence MEKSVAETENGDAFLELKKLPT. S4 is modified (phosphoserine). The short motif at 29 to 35 is the YXXXXLphi motif element; the sequence is YTKEELL. Positions 40–99 are disordered; sequence RPYSKQRPSCLSEKYDSDGVWDPEKWHASLYPASGRSSPVESLKKESESDRPSLVRRIAD. A compositionally biased stretch (basic and acidic residues) spans 52–66; sequence EKYDSDGVWDPEKWH. Phosphoserine occurs at positions 73 and 77. The segment covering 81 to 99 has biased composition (basic and acidic residues); the sequence is SLKKESESDRPSLVRRIAD. Phosphoserine is present on residues S114, S119, S135, and S137. Positions 130–160 are interaction with CSDE1; the sequence is VSSRRSGSPLEKDSDGLRLLGGRRIGSGRII. Residues 194 to 210 carry the Nuclear localization signal motif; that stretch reads RREFGDSKRVFGERRRN. A disordered region spans residues 206–229; the sequence is ERRRNDSYTEEEPEWFSAGPTSQS. The interaction with DDX6 stretch occupies residues 218-239; the sequence is PEWFSAGPTSQSETIELTGFDD. Phosphoserine occurs at positions 300, 344, 352, and 373. Residues 341-360 are disordered; it reads SNPSRSGSRSSSLGSTPHEE. Positions 344-355 are enriched in low complexity; sequence SRSGSRSSSLGS. K409 participates in a covalent cross-link: Glycyl lysine isopeptide (Lys-Gly) (interchain with G-Cter in SUMO2). Position 416 is a phosphoserine (S416). The short motif at 437–446 is the Nuclear export signal element; it reads VEAGLKGLKV. The interaction with LSM14A stretch occupies residues 447–489; the sequence is DQQMKNSTPFMAEHLEETLSAASSNRQLKKDGDMTAFNKLVNT. The residue at position 485 (K485) is an N6-acetyllysine. Phosphoserine is present on residues S563 and S586. Disordered regions lie at residues 585–616, 642–693, 708–800, and 906–951; these read PSPI…SAQM, FYQP…MLSP, REKT…VPGT, and LHPP…SSPV. A Nuclear export signal motif is present at residues 612–637; sequence VSAQMSQLELQQAALEGLALPHDLAV. A compositionally biased stretch (basic and acidic residues) spans 651 to 660; sequence QVDRTRDGLR. S692 is subject to Phosphoserine. The tract at residues 694-712 is interaction with PATL1; that stretch reads SFTPTSVIRKMYESREKTK. Residues 724–734 show a composition bias toward basic and acidic residues; sequence DGKEDTQKTSE. Polar residues-rich tracts occupy residues 735–774 and 910–928; these read ENLL…QTSR and GSSS…NVPS. Residues S751, S919, and S949 each carry the phosphoserine modification. The segment at 938 to 983 is interaction with LSM14A; the sequence is QLEHRTSQRSSSPVGLAKWFGSDVLQQPLPSMPTKVISVDELEYRQ.

It belongs to the 4E-T/EIF4E-T family. As to quaternary structure, interacts (via YXXXXLphi motif) with EIF4E. Interacts (via YXXXXLphi motif) with EIF4E2. Interacts with DDX6. Interacts with CSDE1/UNR. Interacts with CNOT1; promoting association with the CCR4-NOT complex. Interacts with LSM14A; promoting EIF4ENIF1 localization to P-bodies. Interacts with PATL1. Interacts with importin beta only in the presence of importin alpha, suggesting a direct interaction with importin alpha. Interacts with APOBEC3G in an RNA-dependent manner. Post-translationally, phosphorylation by MAPK8/JNK1 and or MAPK9/JNK2 in response to oxidative stress promotes P-body assembly. Phosphorylated during meiotic maturation. As to expression, highly expressed in developing oocytes.

The protein localises to the cytoplasm. It localises to the nucleus. Its subcellular location is the PML body. It is found in the nucleus speckle. Its function is as follows. EIF4E-binding protein that regulates translation and stability of mRNAs in processing bodies (P-bodies). Plays a key role in P-bodies to coordinate the storage of translationally inactive mRNAs in the cytoplasm and prevent their degradation. Acts as a binding platform for multiple RNA-binding proteins: promotes deadenylation of mRNAs via its interaction with the CCR4-NOT complex, and blocks decapping via interaction with eIF4E (EIF4E and EIF4E2), thereby protecting deadenylated and repressed mRNAs from degradation. Component of a multiprotein complex that sequesters and represses translation of proneurogenic factors during neurogenesis. Promotes miRNA-mediated translational repression. Involved in mRNA translational repression mediated by the miRNA effector TNRC6B by protecting TNRC6B-targeted mRNAs from decapping and subsequent decay. Required for the formation of P-bodies. Also acts as a nucleoplasmic shuttling protein, which mediates the nuclear import of EIF4E and DDX6 by a piggy-back mechanism. The polypeptide is Eukaryotic translation initiation factor 4E transporter (Mus musculus (Mouse)).